A 182-amino-acid polypeptide reads, in one-letter code: Keratin, high-sulfur matrix protein, B2D (182 aa).

6 repeat units span residues proline 27 to glutamine 36, proline 37 to glutamine 46, proline 47 to glutamine 56, proline 57 to glutamine 66, proline 67 to glutamine 76, and proline 77 to glutamate 86. A 6 X 10 AA tandem repeats region spans residues proline 27–glutamate 86.

The keratin products of mammalian epidermal derivatives such as wool and hair consist of microfibrils embedded in a rigid matrix of other proteins. The matrix proteins include the high-sulfur and high-tyrosine keratins, having molecular weights of 6-20 kDa, whereas the microfibrils contain the larger, low-sulfur keratins (40-56 kDa). This is Keratin, high-sulfur matrix protein, B2D from Ovis aries (Sheep).